A 387-amino-acid polypeptide reads, in one-letter code: Proteinase R (387 aa).

Positions 1–21 (MRLSILLGLLPLAPRPPAVDA) are cleaved as a signal peptide. The propeptide occupies 22-108 (VEQRSEPAPL…IEQDAIVNIN (87 aa)). In terms of domain architecture, Inhibitor I9 spans 42 to 107 (KYIVKLKEGS…YIEQDAIVNI (66 aa)). Positions 115-387 (PWGLARISST…NLLAYNNYQG (273 aa)) constitute a Peptidase S8 domain. T124 is a binding site for Ca(2+). 2 disulfides stabilise this stretch: C142/C231 and C286/C357. Active-site charge relay system residues include D147 and H177. Residue D308 coordinates Ca(2+). The Charge relay system role is filled by S332. D368 contributes to the Ca(2+) binding site.

Belongs to the peptidase S8 family. Requires Ca(2+) as cofactor.

In terms of biological role, serine proteinase. The sequence is that of Proteinase R (PROR) from Parengyodontium album (Tritirachium album).